We begin with the raw amino-acid sequence, 368 residues long: sn-1 linoleoyl-lipid 6-desaturase (368 aa).

The next 2 membrane-spanning stretches (helical) occupy residues 47-67 (IILA…DVLW) and 68-88 (MKLL…FNIS). The Histidine box-1 motif lies at 89–93 (HDGNH). The Histidine box-2 motif lies at 124-129 (HNVLHH). The next 3 membrane-spanning stretches (helical) occupy residues 164-184 (WFIW…DVQT), 204-224 (IATL…IPIA), and 233-253 (VIGA…VFML). Residues 305 to 309 (HHLFP) carry the Histidine box-3 motif.

It belongs to the fatty acid desaturase type 2 family. The cofactor is Fe(2+).

It localises to the cell inner membrane. Its subcellular location is the cellular thylakoid membrane. The catalysed reaction is a 1-[(9Z,12Z)-octadecdienoyl]-2-acyl-glycerolipid + 2 reduced [2Fe-2S]-[ferredoxin] + O2 + 2 H(+) = a 1-[(6Z,9Z,12Z)-octadectrienoyl]-2-acyl-glycerolipid + 2 oxidized [2Fe-2S]-[ferredoxin] + 2 H2O. Its pathway is lipid metabolism; polyunsaturated fatty acid biosynthesis. Activity requires ferredoxin, which is the natural electron donor, or cytochrome b5. In addition, activity is increased in the presence of the intermediate electron donors, NADPH and FADH(2). Functionally, desaturase involved in fatty acid biosynthesis. Introduces a double bond at carbon 6 of linoleoyl group (18:2) attached to the sn-1 position of the glycerol moiety of membrane glycerolipids, leading to the formation of gamma-linolenic acid (GLA). The protein is sn-1 linoleoyl-lipid 6-desaturase of Arthrospira platensis (Spirulina platensis).